Consider the following 228-residue polypeptide: 2,3-bisphosphoglycerate-dependent phosphoglycerate mutase (228 aa).

Residues 8–15 (RHGQSVWN), 21–22 (TG), Arg-60, 87–90 (ERHY), Lys-98, 114–115 (RR), and 183–184 (GN) contribute to the substrate site. His-9 acts as the Tele-phosphohistidine intermediate in catalysis. Glu-87 functions as the Proton donor/acceptor in the catalytic mechanism.

The protein belongs to the phosphoglycerate mutase family. BPG-dependent PGAM subfamily. Homodimer.

The enzyme catalyses (2R)-2-phosphoglycerate = (2R)-3-phosphoglycerate. The protein operates within carbohydrate degradation; glycolysis; pyruvate from D-glyceraldehyde 3-phosphate: step 3/5. Catalyzes the interconversion of 2-phosphoglycerate and 3-phosphoglycerate. In Rhodospirillum centenum (strain ATCC 51521 / SW), this protein is 2,3-bisphosphoglycerate-dependent phosphoglycerate mutase.